The chain runs to 353 residues: Paraneoplastic antigen Ma1 homolog (353 aa).

The protein belongs to the PNMA family.

The protein resides in the nucleus. It is found in the nucleolus. This chain is Paraneoplastic antigen Ma1 homolog (PNMA1), found in Bos taurus (Bovine).